A 189-amino-acid chain; its full sequence is Phomopsin biosynthesis cluster protein D (189 aa).

Belongs to the oryJ family.

Functionally, part of the gene cluster that mediates the biosynthesis of the phomopsins, a group of hexapeptide mycotoxins which infects lupins and causes lupinosis disease in livestock. The role of phomC within the phomopsins biosynthesis pathway has still to be determined. The pathway starts with the processing of the precursor phomA by several endopeptidases including kexin proteases as well as the cluster-specific S41 family peptidase phomP1 and the oligopeptidase phomG to produce 10 identical copies of the hexapeptide Tyr-Val-Ile-Pro-Ile-Asp. After being excised from the precursor peptide, the core peptides are cyclized and modified post-translationally by enzymes encoded within the gene cluster. The timing and order of proteolysis of the phomA precursor and PTMs are still unknown. Two tyrosinase-like enzymes, phomQ1 and phomQ2, catalyze the chlorination and hydroxylation of Tyr, respectively. PhomYb, is proposed to be involved in the construction of the macrocyclic structure. The other 4 ustYa family proteins may be involved in PTMs that generate the unique structure of phomopsin A. PhomYa is required for the hydroxylation of C-beta of Tyr. PhomYc, phomYd, and phomYe are responsible for the biosynthesis of 2,3-dehydroisoleucine (dIle), 2,3-dehydroaspartic acid (dAsp), and 3,4-dehydroproline (dPro), respectively. While dIle formation by phomYc is indispensable for the installation of dAsp by phomYd, the order of the other PTMs have not been elucidated yet. Most of the biosynthetic enzymes likely have broad substrate specificity, and thus, there might be a metabolic grid from a precursor to phomopsin A. The enzyme(s) responsible for the biosynthesis of 3,4-dehydrovaline (dVal) have also not been identified yet. Finally, phomM acts as an S-adenosylmethionine-dependent alpha-N-methyltransferase that catalyzes two successive N-methylation reactions, converting N-desmethyl-phomopsin A to phomopsin A and phomopsin A further to an N,N-dimethylated congener called phomopsin E. The polypeptide is Phomopsin biosynthesis cluster protein D (Diaporthe leptostromiformis (Lupinosis disease fungus)).